The following is a 238-amino-acid chain: Heme oxygenase (238 aa).

His17 serves as a coordination point for heme b.

The protein belongs to the heme oxygenase family.

The protein localises to the plastid. It localises to the chloroplast. It catalyses the reaction heme b + 3 reduced [NADPH--hemoprotein reductase] + 3 O2 = biliverdin IXalpha + CO + Fe(2+) + 3 oxidized [NADPH--hemoprotein reductase] + 3 H2O + H(+). Functionally, catalyzes the opening of the heme ring with the release of iron. Key enzyme in the synthesis of the chromophoric part of the photosynthetic antennae. This is Heme oxygenase (pbsA) from Pyropia yezoensis (Susabi-nori).